The chain runs to 143 residues: MDQTLSSFGNVFAFLALGIVFVAGGYLTARMLRPSRPNPAKNSTYECGEEAVGSAWVKFNIRFYVVALIFIIFDVEVVFLYPWATVFKSLGVFALVEVLVFAGILILGLVYAWVKGDLDWVRPEPKVPQMPVMPDRKAEGGRA.

The next 3 membrane-spanning stretches (helical) occupy residues 8-28 (FGNV…GYLT), 63-83 (FYVV…LYPW), and 90-110 (LGVF…LGLV).

This sequence belongs to the complex I subunit 3 family. In terms of assembly, NDH-1 is composed of 14 different subunits. Subunits NuoA, H, J, K, L, M, N constitute the membrane sector of the complex.

The protein resides in the cell inner membrane. It catalyses the reaction a quinone + NADH + 5 H(+)(in) = a quinol + NAD(+) + 4 H(+)(out). NDH-1 shuttles electrons from NADH, via FMN and iron-sulfur (Fe-S) centers, to quinones in the respiratory chain. The immediate electron acceptor for the enzyme in this species is believed to be a menaquinone. Couples the redox reaction to proton translocation (for every two electrons transferred, four hydrogen ions are translocated across the cytoplasmic membrane), and thus conserves the redox energy in a proton gradient. This Chlorobium phaeobacteroides (strain DSM 266 / SMG 266 / 2430) protein is NADH-quinone oxidoreductase subunit A.